Here is a 544-residue protein sequence, read N- to C-terminus: Methionine--tRNA ligase (544 aa).

The 'HIGH' region motif lies at 10–20 (PYANGSLHLGH). Zn(2+) is bound by residues C141, C144, C153, and C156. Residues 329-333 (KLSTS) carry the 'KMSKS' region motif. T332 is a binding site for ATP.

This sequence belongs to the class-I aminoacyl-tRNA synthetase family. MetG type 1 subfamily. As to quaternary structure, monomer. Zn(2+) is required as a cofactor.

Its subcellular location is the cytoplasm. The catalysed reaction is tRNA(Met) + L-methionine + ATP = L-methionyl-tRNA(Met) + AMP + diphosphate. Its function is as follows. Is required not only for elongation of protein synthesis but also for the initiation of all mRNA translation through initiator tRNA(fMet) aminoacylation. The polypeptide is Methionine--tRNA ligase (Bacillus mycoides (strain KBAB4) (Bacillus weihenstephanensis)).